The following is a 269-amino-acid chain: Lck-interacting transmembrane adapter 1 (269 aa).

Residues 1 to 7 (MRPPVPS) are Extracellular-facing. A helical; Signal-anchor for type III membrane protein transmembrane segment spans residues 8–28 (APLALWVLGCFSLLLWLWALC). Residues cysteine 28 and cysteine 31 are each lipidated (S-palmitoyl cysteine). Over 29–269 (TACHRKRAQR…VYESIKEMGL (241 aa)) the chain is Cytoplasmic. The interval 102–133 (STRSQVPNSAFPPRQLPRAPPAAPATAPSTSS) is disordered. A compositionally biased stretch (pro residues) spans 115–124 (RQLPRAPPAA). Phosphotyrosine occurs at positions 137, 175, and 207. Residues 137–140 (YSNV) form an interaction with GRB2 region. Interaction with CSK stretches follow at residues 175 to 178 (YACI) and 207 to 210 (YSRV). Tyrosine 242 and tyrosine 261 each carry phosphotyrosine; by LYN or LCK. The segment at 242 to 245 (YEAI) is interaction with LCK and PIK3R1. Residues 261–264 (YESI) are interaction with LCK, PLCG2 and PIK3R1. A Phosphoserine modification is found at serine 263.

As to quaternary structure, when phosphorylated in response to TCR stimulation and/or CD4 costimulation, interacts with LCK, CSK, FYN, PTPN11/SHP2, GRB2, PIK3R1 and GRAP2. When phosphorylated in response to BCR activation, interacts with LYN, PIK3R1, PLCG2 and GRB2. Palmitoylation of Cys-28 and Cys-31 is required for raft targeting. In terms of processing, phosphorylated on tyrosines upon TCR activation and/or CD4 coreceptor stimulation, or upon BCR stimulation; which leads to the recruitment of SH2-containing proteins. In terms of tissue distribution, expressed in spleen and lung. Present in primary B-cells and peripheral T-cells (at protein level).

The protein localises to the cell membrane. Involved in BCR (B-cell antigen receptor)-mediated signaling in B-cells and TCR (T-cell antigen receptor)-mediated T-cell signaling in T-cells. In absence of TCR signaling, may be involved in CD4-mediated inhibition of T-cell activation. Couples activation of these receptors and their associated kinases with distal intracellular events such as calcium mobilization or MAPK activation through the recruitment of PLCG2, GRB2, GRAP2, and other signaling molecules. In Mus musculus (Mouse), this protein is Lck-interacting transmembrane adapter 1 (Lime1).